The following is a 198-amino-acid chain: Small ribosomal subunit protein uS4 (198 aa).

One can recognise an S4 RNA-binding domain in the interval 91 to 151; it reads SRLDNIVYRL…EKSKNLKIVE (61 aa).

The protein belongs to the universal ribosomal protein uS4 family. Part of the 30S ribosomal subunit. Contacts protein S5. The interaction surface between S4 and S5 is involved in control of translational fidelity.

In terms of biological role, one of the primary rRNA binding proteins, it binds directly to 16S rRNA where it nucleates assembly of the body of the 30S subunit. Its function is as follows. With S5 and S12 plays an important role in translational accuracy. The chain is Small ribosomal subunit protein uS4 from Phytoplasma australiense.